We begin with the raw amino-acid sequence, 196 residues long: Large ribosomal subunit protein bL25 (196 aa).

The protein belongs to the bacterial ribosomal protein bL25 family. CTC subfamily. In terms of assembly, part of the 50S ribosomal subunit; part of the 5S rRNA/L5/L18/L25 subcomplex. Contacts the 5S rRNA. Binds to the 5S rRNA independently of L5 and L18.

Functionally, this is one of the proteins that binds to the 5S RNA in the ribosome where it forms part of the central protuberance. This Bacteroides thetaiotaomicron (strain ATCC 29148 / DSM 2079 / JCM 5827 / CCUG 10774 / NCTC 10582 / VPI-5482 / E50) protein is Large ribosomal subunit protein bL25.